Consider the following 90-residue polypeptide: Early nodulin-36A (90 aa).

The chain is Early nodulin-36A from Glycine max (Soybean).